The following is a 134-amino-acid chain: Cytochrome c-type biogenesis protein CcmE (134 aa).

At 1-7 (MKRKYRR) the chain is on the cytoplasmic side. Residues 8-28 (LFVVIITLSIFAGSVVLVLGK) traverse the membrane as a helical; Signal-anchor for type II membrane protein segment. The Periplasmic segment spans residues 29-134 (LKNNVSFFYT…MPNKYKTNDL (106 aa)). Heme is bound by residues histidine 120 and tyrosine 124.

The protein belongs to the CcmE/CycJ family.

It localises to the cell inner membrane. Functionally, heme chaperone required for the biogenesis of c-type cytochromes. Transiently binds heme delivered by CcmC and transfers the heme to apo-cytochromes in a process facilitated by CcmF and CcmH. This is Cytochrome c-type biogenesis protein CcmE from Ehrlichia ruminantium (strain Welgevonden).